The primary structure comprises 419 residues: Phospho-N-acetylmuramoyl-pentapeptide-transferase (419 aa).

Helical transmembrane passes span 22 to 42 (YVSFRSAVAIVLALLLATVIG), 72 to 92 (TPTMGGLIIIISILIPTLLLA), 99 to 119 (ILLMIVTTVLLGSLGFLDDYI), 135 to 155 (IIGQVGLGFIIGIVLYMNPAV), 208 to 228 (VLFGWILFVCVAVVVVTFISN), 238 to 258 (GLATGSSAIIGVVLAIFAYVS), 278 to 298 (LTIFAFAFVGATIGFLWYNAY), 303 to 323 (FMGDTGSLTLGGIIAVFALII), 328 to 348 (LLPILCFVFIIEGLSVMIQVF), and 396 to 416 (KITVRFWLVGIIMAAITIATL).

The protein belongs to the glycosyltransferase 4 family. MraY subfamily. It depends on Mg(2+) as a cofactor.

Its subcellular location is the cell inner membrane. It carries out the reaction UDP-N-acetyl-alpha-D-muramoyl-L-alanyl-gamma-D-glutamyl-meso-2,6-diaminopimeloyl-D-alanyl-D-alanine + di-trans,octa-cis-undecaprenyl phosphate = di-trans,octa-cis-undecaprenyl diphospho-N-acetyl-alpha-D-muramoyl-L-alanyl-D-glutamyl-meso-2,6-diaminopimeloyl-D-alanyl-D-alanine + UMP. It participates in cell wall biogenesis; peptidoglycan biosynthesis. Functionally, catalyzes the initial step of the lipid cycle reactions in the biosynthesis of the cell wall peptidoglycan: transfers peptidoglycan precursor phospho-MurNAc-pentapeptide from UDP-MurNAc-pentapeptide onto the lipid carrier undecaprenyl phosphate, yielding undecaprenyl-pyrophosphoryl-MurNAc-pentapeptide, known as lipid I. The polypeptide is Phospho-N-acetylmuramoyl-pentapeptide-transferase (Porphyromonas gingivalis (strain ATCC BAA-308 / W83)).